The chain runs to 122 residues: NADH-ubiquinone oxidoreductase chain 3 (122 aa).

Transmembrane regions (helical) follow at residues 12–32 (VLIF…LSYV), 66–86 (LVAI…PWAV), and 91–111 (VTIF…VGFI).

It belongs to the complex I subunit 3 family.

Its subcellular location is the mitochondrion membrane. The enzyme catalyses a ubiquinone + NADH + 5 H(+)(in) = a ubiquinol + NAD(+) + 4 H(+)(out). Core subunit of the mitochondrial membrane respiratory chain NADH dehydrogenase (Complex I) that is believed to belong to the minimal assembly required for catalysis. Complex I functions in the transfer of electrons from NADH to the respiratory chain. The immediate electron acceptor for the enzyme is believed to be ubiquinone. This chain is NADH-ubiquinone oxidoreductase chain 3 (NAD3), found in Reclinomonas americana.